A 1172-amino-acid chain; its full sequence is Phytochrome B (1172 aa).

Gly residues predominate over residues 1-16 (MVSGVGGSGGGRGGGR). The disordered stretch occupies residues 1 to 54 (MVSGVGGSGGGRGGGRGGEEEPSSSHTPNNRRGGEQAQSSGTKSLRPRSNTESM). Residues 24–54 (SSHTPNNRRGGEQAQSSGTKSLRPRSNTESM) show a composition bias toward polar residues. The 182-residue stretch at 252–433 (DIKLLCDTVV…AFGLQLNMEL (182 aa)) folds into the GAF domain. Phytochromobilin is bound at residue C357. PAS domains are found at residues 652-723 (VARE…LRGD) and 786-857 (DYKA…MIVL). Positions 934–1153 (YICQVIKNPL…LIILELPVPR (220 aa)) constitute a Histidine kinase domain.

The protein belongs to the phytochrome family. Homodimer. Interacts with ADO1 and PKS4. Stabilized by interactions with PAPP5 and FYPP3 which are enhanced in the phosphorylated Pfr form. Interacts with VOZ1 and VOZ2. Binds, via its photosensory domain, to PTAC12/HMR/PAP5 when photoactivated; this interaction stimulates its localization to photobodies. Interacts with CRY1 specifically when in the dark/far-red (Pr) state, but not when red light-activated (Pfr). Interacts with PIF4 and PIF5 in response to low blue light (LBL). Component of a red light-dependent nuclear complex made of PHL, PHYB and CO. Interacts directly with PHL. Binds to UNE10/PIF8 when red light-activated (Pfr). When light-activated, interacts with PCH1 and PCHL. Associated with DRT111/RSN2/SFPS, SMP2 and SWAP1 in nuclear photobodies upon response to red light (Pfr form). Post-translationally, contains one covalently linked phytochromobilin chromophore. In terms of tissue distribution, expressed in fruits, flowers, leaves, stems, seedlings and roots.

It localises to the cytoplasm. The protein localises to the nucleus. The protein resides in the nucleoplasm. Its subcellular location is the nucleus speckle. Regulatory photoreceptor which exists in two forms that are reversibly interconvertible by light: the Pr form that absorbs maximally in the red region of the spectrum and the Pfr form that absorbs maximally in the far-red region. Photoconversion of Pr to Pfr induces an array of morphogenetic responses, whereas reconversion of Pfr to Pr cancels the induction of those responses. Pfr controls the expression of a number of nuclear genes including those encoding the small subunit of ribulose-bisphosphate carboxylase, chlorophyll A/B binding protein, protochlorophyllide reductase, rRNA, etc. It also controls the expression of its own gene(s) in a negative feedback fashion. Involved in the flowering time regulation. Involved in light-regulated circadian phase control that triggers stomatal aperture, stomatal conductance, and CO(2) assimilation. Implicated in red light perception, and, to a lower extent, in blue light signaling. Controls thermomorphogenesis in the daytime and regulates temperature responses by associating with the promoters of key target genes in a temperature-dependent manner and subsequently repressing their expression in a PIF4-dependent manner (temperature-responsive transcriptional regulator); this process requires PTAC12/HMR/PAP5 (transcriptional activator). Thermal timer that integrates temperature information over the course of the night. Detabilizes UNE10/PIF8 in red light. This Arabidopsis thaliana (Mouse-ear cress) protein is Phytochrome B.